We begin with the raw amino-acid sequence, 151 residues long: Large ribosomal subunit protein uL15 (151 aa).

It belongs to the universal ribosomal protein uL15 family. As to quaternary structure, part of the 50S ribosomal subunit.

Functionally, binds to the 23S rRNA. The chain is Large ribosomal subunit protein uL15 from Hyperthermus butylicus (strain DSM 5456 / JCM 9403 / PLM1-5).